A 192-amino-acid polypeptide reads, in one-letter code: Thymidine kinase (192 aa).

ATP contacts are provided by residues 9-16 (SAMNAGKS) and 87-90 (DECQ). Glutamate 88 serves as the catalytic Proton acceptor. Zn(2+)-binding residues include cysteine 145, cysteine 147, cysteine 182, and histidine 185.

This sequence belongs to the thymidine kinase family. In terms of assembly, homotetramer.

It localises to the cytoplasm. The enzyme catalyses thymidine + ATP = dTMP + ADP + H(+). This is Thymidine kinase from Vibrio vulnificus (strain YJ016).